The sequence spans 419 residues: L-rhamnose isomerase (419 aa).

Mn(2+) contacts are provided by histidine 262, aspartate 294, and aspartate 296.

It belongs to the rhamnose isomerase family. Homotetramer. Requires Mn(2+) as cofactor.

The protein localises to the cytoplasm. The catalysed reaction is L-rhamnopyranose = L-rhamnulose. Its pathway is carbohydrate degradation; L-rhamnose degradation; glycerone phosphate from L-rhamnose: step 1/3. In terms of biological role, catalyzes the interconversion of L-rhamnose and L-rhamnulose. The polypeptide is L-rhamnose isomerase (Escherichia coli O139:H28 (strain E24377A / ETEC)).